The following is a 386-amino-acid chain: Trichocyst matrix protein T2-B (386 aa).

A signal peptide spans 1–19 (MKTIILALALIALVSSTQS). The propeptide occupies 20-48 (DVIDTIKKIDQSPFGRTLFDTIWLELQTG). Positions 51 to 154 (LDRLVSTLTD…AEEHEDFEEK (104 aa)) form a coiled coil. The propeptide occupies 184–238 (KGKAAKQPHKFTKDVANLIQKHFTTSAKKTAKFQHRKGYSKLFKAFATIASKVEQ). The stretch at 294–325 (ALANAISDLAALNDIIAQVEASLDTTVQRIEN) forms a coiled coil.

The protein belongs to the TMP family.

The protein resides in the trichocyst. Its function is as follows. Structural protein that crystallize inside the trichocyst matrix. The chain is Trichocyst matrix protein T2-B (T2B) from Paramecium tetraurelia.